We begin with the raw amino-acid sequence, 1264 residues long: P-type sodium-transporting ATPase4 (1264 aa).

The segment covering 1 to 12 has biased composition (polar residues); that stretch reads MSSQNNNKQGGQ. Residues 1–102 form a disordered region; it reads MSSQNNNKQG…INGEKNDDNN (102 aa). Composition is skewed to basic and acidic residues over residues 15 to 42 and 50 to 64; these read NNKK…DELN and NDMK…KKNE. The next 8 helical transmembrane spans lie at 165–185, 186–206, 359–379, 393–413, 923–943, 1006–1026, 1203–1223, and 1226–1246; these read VWLI…LVAA, VASL…IVTL, GLIG…AVII, FVII…GLPM, FVCF…VAIV, IFEA…CTGF, CSIS…TSIL, and TCLL…NLFL.

It belongs to the cation transport ATPase (P-type) (TC 3.A.3) family.

It is found in the cell membrane. The catalysed reaction is Na(+)(in) + ATP + H2O = Na(+)(out) + ADP + phosphate + H(+). With respect to regulation, inhibited by cipargamin and other spiroindolone compounds. Inhibited by 4-cyano-3-methylisoquinoline derivatives MB14 and MB10 but not RK18. Inhibited by (+)-SJ733, a dihydroisoquinolone compound. Functionally, sodium-exporting ATPase. Required for the extrusion of Na(+) from the intraerythrocytic parasites to maintain a low cytosolic concentration of Na(+). The polypeptide is P-type sodium-transporting ATPase4 (Plasmodium falciparum (isolate 3D7)).